Consider the following 537-residue polypeptide: Exodeoxyribonuclease 7 large subunit (537 aa).

The segment at 508–537 (GEGAPVEPPQAARPSKGARTKAAQPSLFDD) is disordered.

Belongs to the XseA family. As to quaternary structure, heterooligomer composed of large and small subunits.

The protein resides in the cytoplasm. It carries out the reaction Exonucleolytic cleavage in either 5'- to 3'- or 3'- to 5'-direction to yield nucleoside 5'-phosphates.. In terms of biological role, bidirectionally degrades single-stranded DNA into large acid-insoluble oligonucleotides, which are then degraded further into small acid-soluble oligonucleotides. This Azorhizobium caulinodans (strain ATCC 43989 / DSM 5975 / JCM 20966 / LMG 6465 / NBRC 14845 / NCIMB 13405 / ORS 571) protein is Exodeoxyribonuclease 7 large subunit.